The following is a 969-amino-acid chain: RNA polymerase-associated protein RapA (969 aa).

Residues 164 to 334 (EVGRRHAPRV…FARLRLLDSD (171 aa)) form the Helicase ATP-binding domain. ATP is bound at residue 177–184 (DEVGLGKT). Positions 280-283 (DEAH) match the DEAH box motif. The region spanning 492–668 (RVNWLLEKLK…GSNEALDDVI (177 aa)) is the Helicase C-terminal domain.

The protein belongs to the SNF2/RAD54 helicase family. RapA subfamily. In terms of assembly, interacts with the RNAP. Has a higher affinity for the core RNAP than for the holoenzyme. Its ATPase activity is stimulated by binding to RNAP.

In terms of biological role, transcription regulator that activates transcription by stimulating RNA polymerase (RNAP) recycling in case of stress conditions such as supercoiled DNA or high salt concentrations. Probably acts by releasing the RNAP, when it is trapped or immobilized on tightly supercoiled DNA. Does not activate transcription on linear DNA. Probably not involved in DNA repair. The sequence is that of RNA polymerase-associated protein RapA from Vibrio vulnificus (strain CMCP6).